The primary structure comprises 630 residues: Eukaryotic translation initiation factor 2-alpha kinase 1 (630 aa).

Positions 1 to 40 are disordered; the sequence is MQGGNSGVRKREEEGDGAGAVAAPPAIDFPAEGPDPEYDE. Residues 85 to 104 carry the SIFI-degron motif; sequence LRSRQVFKLLCQTFIKMGLL. Residues 167-583 form the Protein kinase domain; that stretch reads FEELAILGKG…AIQLLQSELF (417 aa). ATP is bound by residues 173–181 and K196; that span reads LGKGGYGRV. The interval 259 to 301 is disordered; the sequence is DQEEDREQCGVKNDESSSSSIIFAEPTPEKEKRFGESDTENQN. T285 is modified (phosphothreonine). The span at 285-294 shows a compositional bias: basic and acidic residues; that stretch reads TPEKEKRFGE. An HRM 1 repeat occupies 410–415; sequence ACPYVM. The Proton acceptor role is filled by D442. Residues T486 and T488 each carry the phosphothreonine; by autocatalysis modification. Position 493 is a phosphothreonine (T493). One copy of the HRM 2 repeat lies at 552–557; sequence RCPVQA.

This sequence belongs to the protein kinase superfamily. Ser/Thr protein kinase family. GCN2 subfamily. In terms of assembly, synthesized in an inactive form that binds to the N-terminal domain of CDC37. Has to be associated with a multiprotein complex containing Hsp90, CDC37 and PPP5C for maturation and activation by autophosphorylation. The phosphatase PPP5C modulates this activation. Homodimer; homodimerizes in presence of heme, forming a disulfide-linked inactive homodimer. Interacts with DELE1; binds both to full-length DELE1 and processed form of DELE1 (S-DELE1) in response to stress, leading to activate its protein kinase activity and trigger the integrated stress response (ISR). Post-translationally, activated by autophosphorylation; phosphorylated predominantly on serine and threonine residues, but also on tyrosine residues. Autophosphorylation at Thr-488 is required for kinase activation. The active autophosphorylated form apparently is largely refractory to cellular heme fluctuations. Ubiquitinated and degraded by the SIFI complex once the mitochondrial stress has been resolved, thereby providing stress response silencing. Within the SIFI complex, UBR4 initiates ubiquitin chain that are further elongated or branched by KCMF1.

It catalyses the reaction L-seryl-[protein] + ATP = O-phospho-L-seryl-[protein] + ADP + H(+). The catalysed reaction is L-threonyl-[protein] + ATP = O-phospho-L-threonyl-[protein] + ADP + H(+). With respect to regulation, in normal conditions, the protein kinase activity is inhibited; inhibition is relieved by various stress conditions. Inhibited by heme: in presence of heme, forms a disulfide-linked inactive homodimer. Heme depletion relieves inhibition and stimulates kinase activity by autophosphorylation. Inhibited by the heme metabolites biliverdin and bilirubin. Induced by oxidative stress generated by arsenite treatment. Binding of nitric oxide (NO) to the heme iron in the N-terminal heme-binding domain activates the kinase activity, while binding of carbon monoxide (CO) suppresses kinase activity. Protein kinase activity is also activated upon binding to DELE1 in response to various stress, triggering the integrated stress response (ISR): activated by full-length DELE1 in response to iron deficiency, while it is activated by the processed form of DELE1 (S-DELE1) in response to mitochondrial stress. Its function is as follows. Metabolic-stress sensing protein kinase that phosphorylates the alpha subunit of eukaryotic translation initiation factor 2 (EIF2S1/eIF-2-alpha) in response to various stress conditions. Key activator of the integrated stress response (ISR) required for adaptation to various stress, such as heme deficiency, oxidative stress, osmotic shock, mitochondrial dysfunction and heat shock. EIF2S1/eIF-2-alpha phosphorylation in response to stress converts EIF2S1/eIF-2-alpha in a global protein synthesis inhibitor, leading to a global attenuation of cap-dependent translation, while concomitantly initiating the preferential translation of ISR-specific mRNAs, such as the transcriptional activator ATF4, and hence allowing ATF4-mediated reprogramming. Acts as a key sensor of heme-deficiency: in normal conditions, binds hemin via a cysteine thiolate and histidine nitrogenous coordination, leading to inhibit the protein kinase activity. This binding occurs with moderate affinity, allowing it to sense the heme concentration within the cell: heme depletion relieves inhibition and stimulates kinase activity, activating the ISR. Thanks to this unique heme-sensing capacity, plays a crucial role to shut off protein synthesis during acute heme-deficient conditions. In red blood cells (RBCs), controls hemoglobin synthesis ensuring a coordinated regulation of the synthesis of its heme and globin moieties. It thereby plays an essential protective role for RBC survival in anemias of iron deficiency. Iron deficiency also triggers activation by full-length DELE1. Also activates the ISR in response to mitochondrial dysfunction: HRI/EIF2AK1 protein kinase activity is activated upon binding to the processed form of DELE1 (S-DELE1), thereby promoting the ATF4-mediated reprogramming. Also acts as an activator of mitophagy in response to mitochondrial damage: catalyzes phosphorylation of eIF-2-alpha (EIF2S1) following activation by S-DELE1, thereby promoting mitochondrial localization of EIF2S1, triggering PRKN-independent mitophagy. The sequence is that of Eukaryotic translation initiation factor 2-alpha kinase 1 from Homo sapiens (Human).